A 247-amino-acid chain; its full sequence is 6-phosphogluconolactonase (247 aa).

The protein belongs to the glucosamine/galactosamine-6-phosphate isomerase family. 6-phosphogluconolactonase subfamily.

The enzyme catalyses 6-phospho-D-glucono-1,5-lactone + H2O = 6-phospho-D-gluconate + H(+). Its pathway is carbohydrate degradation; pentose phosphate pathway; D-ribulose 5-phosphate from D-glucose 6-phosphate (oxidative stage): step 2/3. In terms of biological role, hydrolysis of 6-phosphogluconolactone to 6-phosphogluconate. The protein is 6-phosphogluconolactonase (pgl) of Mycobacterium leprae (strain TN).